Reading from the N-terminus, the 1248-residue chain is Kinesin-like protein KIN-14I (1248 aa).

The MyTH4 domain maps to 88-244 (FQKDPIPTSL…PAREEIEALL (157 aa)). One can recognise an FERM domain in the interval 249–563 (LTTIVFFLDE…HINDVMLRRY (315 aa)). Residues 586–659 (NIEIYEKRVQ…LDKLKSLCDE (74 aa)) adopt a coiled-coil conformation. Residues 675-704 (ETRLKSGQGQESSNRTGVSGNHFERDTLPT) are disordered. Over residues 679–693 (KSGQGQESSNRTGVS) the composition is skewed to polar residues. A coiled-coil region spans residues 708 to 799 (VNNSIEMLAK…TRSLNVTEST (92 aa)). The Kinesin motor domain maps to 872-1193 (KIRVFCRLRP…LMYASRVRCI (322 aa)). 953-960 (GQTGSGKT) contacts ATP. Residues 1201–1223 (VAPKEIMRLKKLIAYWKEQAGKR) form a calmodulin-binding region. The segment at 1220–1248 (AGKRSEDDDLEEIQEERTPKEKADNRLTS) is disordered. Positions 1234-1248 (EERTPKEKADNRLTS) are enriched in basic and acidic residues.

The protein belongs to the TRAFAC class myosin-kinesin ATPase superfamily. Kinesin family. KIN-14 subfamily. In terms of assembly, binds microtubules via its N-terminus containing the MyTH4 domain and binds F-actin via its FERM domain. Binding to calmodulin inhibits microtubule binding activity.

It is found in the cytoplasm. It localises to the cytoskeleton. Minus-end microtubule-dependent motor protein involved in the regulation of cell division. In Oryza sativa subsp. japonica (Rice), this protein is Kinesin-like protein KIN-14I.